We begin with the raw amino-acid sequence, 153 residues long: Replicase large subunit (153 aa).

This sequence belongs to the tobamovirus RNA-directed RNA polymerase family.

The catalysed reaction is RNA(n) + a ribonucleoside 5'-triphosphate = RNA(n+1) + diphosphate. In terms of biological role, the replicase large subunit is an RNA-dependent RNA polymerase active in viral RNA replication. The sequence is that of Replicase large subunit from Citrullus (Cucumber).